The chain runs to 538 residues: DALR anticodon-binding domain-containing protein 3 (538 aa).

As to quaternary structure, part of a complex containing tRNA(Arg) and METTL2. Interacts with tRNA(Arg)(CCU) and tRNA(Arg)(UCU). Interacts with METTL2.

Its function is as follows. Involved in tRNA methylation. Facilitates the recognition and targeting of tRNA(Arg)(CCU) and tRNA(Arg)(UCU) substrates for N(3)-methylcytidine modification by METTL2. The protein is DALR anticodon-binding domain-containing protein 3 (Dalrd3) of Mus musculus (Mouse).